The primary structure comprises 1094 residues: Probable arabinosyltransferase A (1094 aa).

13 consecutive transmembrane segments (helical) span residues 12 to 34, 205 to 224, 247 to 269, 322 to 344, 356 to 375, 408 to 430, 451 to 470, 519 to 536, 543 to 565, 575 to 597, 604 to 626, 641 to 663, and 684 to 706; these read IARL…VPLL, AVML…LAAL, GFAS…VIGA, VWMR…RFVL, SNRV…WLPF, AAVA…IALA, GLLA…TVVV, FAVL…FVLL, GLAS…LLTF, GAFA…RIGL, TLYV…GWFY, IASH…LAAW, and ILAS…GSMA.

This sequence belongs to the emb family.

It localises to the cell membrane. In terms of biological role, arabinosyl transferase responsible for the polymerization of arabinose into the arabinan of arabinogalactan. In Mycobacterium tuberculosis (strain CDC 1551 / Oshkosh), this protein is Probable arabinosyltransferase A (embA).